A 245-amino-acid polypeptide reads, in one-letter code: DNA polymerase sliding clamp (245 aa).

This sequence belongs to the PCNA family. Homotrimer. The subunits circularize to form a toroid; DNA passes through its center. Replication factor C (RFC) is required to load the toroid on the DNA.

Its function is as follows. Sliding clamp subunit that acts as a moving platform for DNA processing. Responsible for tethering the catalytic subunit of DNA polymerase and other proteins to DNA during high-speed replication. The chain is DNA polymerase sliding clamp from Methanococcoides burtonii (strain DSM 6242 / NBRC 107633 / OCM 468 / ACE-M).